The following is a 217-amino-acid chain: Proteasome subunit beta type-6-B like protein (217 aa).

The propeptide at 1–16 (MERHFMDSQIKGVSTG) is removed in mature form. Thr17 functions as the Nucleophile in the catalytic mechanism.

The protein belongs to the peptidase T1B family. The 26S proteasome consists of a 20S proteasome core and two 19S regulatory subunits. The 20S proteasome core is composed of 28 subunits that are arranged in four stacked rings, resulting in a barrel-shaped structure. The two end rings are each formed by seven alpha subunits, and the two central rings are each formed by seven beta subunits. The catalytic chamber with the active sites is on the inside of the barrel.

It localises to the cytoplasm. The protein resides in the nucleus. It catalyses the reaction Cleavage of peptide bonds with very broad specificity.. Its function is as follows. The proteasome is a multicatalytic proteinase complex which is characterized by its ability to cleave peptides with Arg, Phe, Tyr, Leu, and Glu adjacent to the leaving group at neutral or slightly basic pH. The proteasome has an ATP-dependent proteolytic activity. This subunit is involved in antigen processing to generate class I binding peptides. The sequence is that of Proteasome subunit beta type-6-B like protein (psmb6l-b) from Salmo salar (Atlantic salmon).